A 215-amino-acid chain; its full sequence is N-(5'-phosphoribosyl)anthranilate isomerase (215 aa).

Belongs to the TrpF family.

It catalyses the reaction N-(5-phospho-beta-D-ribosyl)anthranilate = 1-(2-carboxyphenylamino)-1-deoxy-D-ribulose 5-phosphate. It participates in amino-acid biosynthesis; L-tryptophan biosynthesis; L-tryptophan from chorismate: step 3/5. This chain is N-(5'-phosphoribosyl)anthranilate isomerase, found in Cellvibrio japonicus (strain Ueda107) (Pseudomonas fluorescens subsp. cellulosa).